Reading from the N-terminus, the 105-residue chain is Imizoquin biosynthesis cluster protein I (105 aa).

Over residues 1–15 the composition is skewed to polar residues; sequence MSSGEPTTMTPSPSE. Residues 1-43 are disordered; sequence MSSGEPTTMTPSPSERTPLLSNGSGGAADDGGTTVTISKPNDG.

It participates in secondary metabolite biosynthesis. Its function is as follows. Part of the gene cluster that mediates the biosynthesis of imizoquins A to D, tripeptide-derived alkaloids that serve a protective role against oxidative stress that are essential for normal germination. ImqB is a canonical three-module NRPS that assembles the tripeptide backbone of the imizoquins via condensation of Trp, Tyr, and Leu-derived precursors. N-methylation by imqF and phenol oxidation by imqC, followed by cyclization via the FAD-dependent oxidase imqH carry out the three-step transformation of L-tyrosine into tetrahydroisoquinoline. Importantly, this sequence requires the presence of a free amine in the tyrosine moiety, indicating that isoquinoline formation occurs prior to peptide bond formation. The imidazolidin-4-one ring of imizoquins could form following additional oxidation of the methyl-derived bridgehead carbon by imqH. Lastly, O-methylation by imqG and leucine hydroxylation by imqE complete biosynthesis of the imizoquins. The chain is Imizoquin biosynthesis cluster protein I from Aspergillus flavus (strain ATCC 200026 / FGSC A1120 / IAM 13836 / NRRL 3357 / JCM 12722 / SRRC 167).